The primary structure comprises 85 residues: Large ribosomal subunit protein eL34 (85 aa).

The protein belongs to the eukaryotic ribosomal protein eL34 family.

The protein is Large ribosomal subunit protein eL34 of Saccharolobus islandicus (strain Y.N.15.51 / Yellowstone #2) (Sulfolobus islandicus).